The following is a 295-amino-acid chain: Probable aspartoacylase (295 aa).

The Zn(2+) site is built by His-16 and Glu-19. Residues Arg-58 and 65–66 (NR) contribute to the substrate site. Position 107 (His-107) interacts with Zn(2+). The substrate site is built by Glu-166 and Tyr-277.

It belongs to the AspA/AstE family. Aspartoacylase subfamily. Zn(2+) is required as a cofactor.

The enzyme catalyses an N-acyl-L-aspartate + H2O = a carboxylate + L-aspartate. The protein is Probable aspartoacylase of Acaryochloris marina (strain MBIC 11017).